A 173-amino-acid chain; its full sequence is Membrane protein PM19L (173 aa).

4 helical membrane passes run 9–29 (IAPL…FASW), 43–63 (GVAG…AGVV), 83–103 (LAAG…AFGL), and 124–144 (FVII…GGLF).

In terms of tissue distribution, expressed in roots, leaf blades, leaf sheaths, stems, spikelets and embryos.

It is found in the membrane. Its function is as follows. May be involved in abiotic stress response through abscisic acid-dependent signaling. The polypeptide is Membrane protein PM19L (Oryza sativa subsp. japonica (Rice)).